The sequence spans 220 residues: Large ribosomal subunit protein eL15 (220 aa).

The protein belongs to the eukaryotic ribosomal protein eL15 family.

The chain is Large ribosomal subunit protein eL15 from Staphylothermus marinus (strain ATCC 43588 / DSM 3639 / JCM 9404 / F1).